The following is an 88-amino-acid chain: Small ribosomal subunit protein uS17 (88 aa).

This sequence belongs to the universal ribosomal protein uS17 family. As to quaternary structure, part of the 30S ribosomal subunit.

In terms of biological role, one of the primary rRNA binding proteins, it binds specifically to the 5'-end of 16S ribosomal RNA. This is Small ribosomal subunit protein uS17 from Synechococcus sp. (strain WH7803).